The chain runs to 622 residues: Ferredoxin-fold anticodon-binding domain-containing protein 1 homolog (622 aa).

Positions 529-622 constitute an FDX-ACB domain; it reads LYPPCYVHDV…IQRQLHVSPR (94 aa).

This Mus musculus (Mouse) protein is Ferredoxin-fold anticodon-binding domain-containing protein 1 homolog (Fdxacb1).